Consider the following 809-residue polypeptide: Sucrose synthase 3 (809 aa).

The GT-B glycosyltransferase stretch occupies residues 277–755; the sequence is MVFNVVILSP…GLQRIYERYT (479 aa).

It belongs to the glycosyltransferase 1 family. Plant sucrose synthase subfamily. Detected in the whole plant with highest expression in developing siliques, vasculature of cotyledons and stomatal guard cells. Also detected throughout the mature parts of the root but not in the expanding zone.

The catalysed reaction is an NDP-alpha-D-glucose + D-fructose = a ribonucleoside 5'-diphosphate + sucrose + H(+). In terms of biological role, sucrose-cleaving enzyme that provides UDP-glucose and fructose for various metabolic pathways. Modulates metabolic homeostasis and direct carbon towards starch synthesis in developing seeds. The sequence is that of Sucrose synthase 3 (SUS3) from Arabidopsis thaliana (Mouse-ear cress).